An 84-amino-acid chain; its full sequence is Large ribosomal subunit protein bL27 (84 aa).

A disordered region spans residues 1 to 25 (MAHKKGQGSTQNNRDSAGRRLGVKK).

Belongs to the bacterial ribosomal protein bL27 family.

This chain is Large ribosomal subunit protein bL27, found in Sulfurovum sp. (strain NBC37-1).